A 235-amino-acid chain; its full sequence is Phosphoribosylaminoimidazole-succinocarboxamide synthase (235 aa).

Belongs to the SAICAR synthetase family.

The catalysed reaction is 5-amino-1-(5-phospho-D-ribosyl)imidazole-4-carboxylate + L-aspartate + ATP = (2S)-2-[5-amino-1-(5-phospho-beta-D-ribosyl)imidazole-4-carboxamido]succinate + ADP + phosphate + 2 H(+). Its pathway is purine metabolism; IMP biosynthesis via de novo pathway; 5-amino-1-(5-phospho-D-ribosyl)imidazole-4-carboxamide from 5-amino-1-(5-phospho-D-ribosyl)imidazole-4-carboxylate: step 1/2. The protein is Phosphoribosylaminoimidazole-succinocarboxamide synthase of Chlorobaculum tepidum (strain ATCC 49652 / DSM 12025 / NBRC 103806 / TLS) (Chlorobium tepidum).